We begin with the raw amino-acid sequence, 190 residues long: Fe/S biogenesis protein NfuA (190 aa).

Residues C148 and C151 each coordinate [4Fe-4S] cluster.

This sequence belongs to the NfuA family. In terms of assembly, homodimer. [4Fe-4S] cluster is required as a cofactor.

Involved in iron-sulfur cluster biogenesis. Binds a 4Fe-4S cluster, can transfer this cluster to apoproteins, and thereby intervenes in the maturation of Fe/S proteins. Could also act as a scaffold/chaperone for damaged Fe/S proteins. This Baumannia cicadellinicola subsp. Homalodisca coagulata protein is Fe/S biogenesis protein NfuA.